A 407-amino-acid chain; its full sequence is Patatin-like protein 2 (407 aa).

Residues 22-228 (LSIDGGGIRG…AANNPALLAI (207 aa)) form the PNPLA domain. The short motif at 26–31 (GGGIRG) is the GXGXXG element. The GXSXG signature appears at 64-68 (GTSTG). Catalysis depends on Ser-66, which acts as the Nucleophile. The Proton acceptor role is filled by Asp-215. Positions 215 to 217 (DGG) match the DGA/G motif. The residue at position 398 (Ser-398) is a Phosphoserine.

It belongs to the patatin family. Expressed specifically in roots.

It is found in the cytoplasm. In terms of biological role, possesses non-specific lipolytic acyl hydrolase (LAH) activity. Catalyzes the hydrolysis of the galactolipids monogalactosyldiacylglycerol (MGDG) and digalactosyldiacylglycerol (DGDG), and less efficiently the phoshpolipids phosphatidylcholine (PC), phosphatidylethanolamine (PE), phosphatidylglycerol (PG), phosphatidic acid (PA), phosphatidylserine (PS) and phosphatidylinositol (PI). Favors the release of fatty acid at the sn-1 position for PC or PE and the sn-2 position for PG, PA, PS and PI. Negatively affects disease resistance to the necrotic fungal pathogen Botrytis cinerea and the avirulent bacteria Pseudomonas syringae by promoting cell death and reducing the efficiency of the hypersensitive response, respectively. However, PLP2 contributes to resistance to cucumber mosaic virus (CMV), an obligate parasite inducing hypersensitive response. May negatively regulate oxylipin production, possibly via participating in membrane repair that includes removal of oxidatively modified lipids. This chain is Patatin-like protein 2 (PLP2), found in Arabidopsis thaliana (Mouse-ear cress).